A 184-amino-acid polypeptide reads, in one-letter code: Probable chemoreceptor glutamine deamidase CheD (184 aa).

The protein belongs to the CheD family.

It catalyses the reaction L-glutaminyl-[protein] + H2O = L-glutamyl-[protein] + NH4(+). Functionally, probably deamidates glutamine residues to glutamate on methyl-accepting chemotaxis receptors (MCPs), playing an important role in chemotaxis. The protein is Probable chemoreceptor glutamine deamidase CheD of Rhizobium etli (strain CIAT 652).